Here is a 103-residue protein sequence, read N- to C-terminus: Large ribosomal subunit protein uL24 (103 aa).

Belongs to the universal ribosomal protein uL24 family. As to quaternary structure, part of the 50S ribosomal subunit.

Its function is as follows. One of two assembly initiator proteins, it binds directly to the 5'-end of the 23S rRNA, where it nucleates assembly of the 50S subunit. Functionally, one of the proteins that surrounds the polypeptide exit tunnel on the outside of the subunit. The chain is Large ribosomal subunit protein uL24 from Haemophilus influenzae (strain 86-028NP).